Here is a 359-residue protein sequence, read N- to C-terminus: Serpentine receptor class epsilon-33 (359 aa).

Helical transmembrane passes span 29 to 49 (VIISILELMIYLVCIHLVNVS), 65 to 85 (ILALPMFGMWYELIIGKFITI), 134 to 156 (YMYSWIFGVLTVAVERVIASVLI), 168 to 188 (PAILLIISQFLSISMAFGLLF), 194 to 214 (LSAHFPWMISCPISVAAYVFV), 255 to 275 (LVFAVLSFIGICGCGIAALHY), and 285 to 305 (LIENVLFLNPFLIGLTAMLSI).

This sequence belongs to the nematode receptor-like protein sre family.

The protein resides in the membrane. This chain is Serpentine receptor class epsilon-33 (sre-33), found in Caenorhabditis elegans.